Reading from the N-terminus, the 609-residue chain is MAFQDFDKIQERVNAERKRKFRKRIILGVVSVLVVAAAIIGGAFAYVTYENKTQEQGKTTNNKSKDSPTKSESPSPKPPSSAAQTVKAGQVDKIIQTLCNSTLYKPTCQNTLKNETKKDTPQTDPRSLLKSAIVAVNDDLDQVFKRVLSLKTENKDDKDAIAQCKLLVDEAKEELGTSMKRINDSEVNNFAKIVPDLDSWLSAVMSYQETCVDGFEEGKLKTEIRKNFNSSQVLTSNSLAMIKSLDGYLSSVPKVKTRLLLEARSSAKETDHITSWLSNKERRMLKAVDVKALKPNATVAKDGSGNFTTINAALKAMPAKYQGRYTIYIKHGIYDESVIIDKKKPNVTMVGDGSQKTIVTGNKSHAKKIRTFLTATFVAQGEGFMAQSMGFRNTAGPEGHQAVAIRVQSDRSVFLNCRFEGYQDTLYAYTHRQYYRSCVIIGTVDFIFGDAAAIFQNCDIFIRKGLPGQKNTVTAQGRVDKFQTTGFVIHNCTVAPNEDLKPVKAQFKSYLGRPWKPHSRTVVMESTIEDVIDPVGWLRWQETDFAIDTLSYAEYKNDGPSGATAARVKWPGFRVLNKEEAMKFTVGPFLQGEWIQAIGSPVKLGLYDA.

A helical membrane pass occupies residues 25–45 (IILGVVSVLVVAAAIIGGAFA). Residues asparagine 51, asparagine 62, asparagine 100, asparagine 114, asparagine 183, asparagine 229, asparagine 296, asparagine 306, asparagine 346, and asparagine 362 are each glycosylated (N-linked (GlcNAc...) asparagine). The interval 54-87 (QEQGKTTNNKSKDSPTKSESPSPKPPSSAAQTVK) is disordered. Residues 89 to 241 (GQVDKIIQTL…QVLTSNSLAM (153 aa)) form a pectinesterase inhibitor 45 region. Residues 296 to 593 (NATVAKDGSG…FTVGPFLQGE (298 aa)) are pectinesterase 45. The substrate site is built by threonine 371 and glutamine 401. Aspartate 424 (proton donor; for pectinesterase activity) is an active-site residue. An intrachain disulfide couples cysteine 438 to cysteine 458. The active-site Nucleophile; for pectinesterase activity is the aspartate 445. A glycan (N-linked (GlcNAc...) asparagine) is linked at asparagine 491. Substrate contacts are provided by arginine 513 and tryptophan 515.

It in the N-terminal section; belongs to the PMEI family. The protein in the C-terminal section; belongs to the pectinesterase family. Expressed in flower buds and pollen.

The protein resides in the membrane. The catalysed reaction is [(1-&gt;4)-alpha-D-galacturonosyl methyl ester](n) + n H2O = [(1-&gt;4)-alpha-D-galacturonosyl](n) + n methanol + n H(+). It functions in the pathway glycan metabolism; pectin degradation; 2-dehydro-3-deoxy-D-gluconate from pectin: step 1/5. Functionally, acts in the modification of cell walls via demethylesterification of cell wall pectin. This chain is Putative pectinesterase/pectinesterase inhibitor 45 (PME45), found in Arabidopsis thaliana (Mouse-ear cress).